Here is a 1319-residue protein sequence, read N- to C-terminus: DNA-directed RNA polymerase subunit beta' (1319 aa).

Zn(2+)-binding residues include Cys-59, Cys-61, Cys-74, and Cys-77. Residues Asp-449, Asp-451, and Asp-453 each coordinate Mg(2+). Positions 773, 846, 853, and 856 each coordinate Zn(2+).

This sequence belongs to the RNA polymerase beta' chain family. In terms of assembly, the RNAP catalytic core consists of 2 alpha, 1 beta, 1 beta' and 1 omega subunit. When a sigma factor is associated with the core the holoenzyme is formed, which can initiate transcription. Mg(2+) serves as cofactor. It depends on Zn(2+) as a cofactor.

It catalyses the reaction RNA(n) + a ribonucleoside 5'-triphosphate = RNA(n+1) + diphosphate. Its function is as follows. DNA-dependent RNA polymerase catalyzes the transcription of DNA into RNA using the four ribonucleoside triphosphates as substrates. This is DNA-directed RNA polymerase subunit beta' from Fusobacterium nucleatum subsp. nucleatum (strain ATCC 25586 / DSM 15643 / BCRC 10681 / CIP 101130 / JCM 8532 / KCTC 2640 / LMG 13131 / VPI 4355).